The sequence spans 512 residues: 2-isopropylmalate synthase (512 aa).

The 264-residue stretch at 5–268 folds into the Pyruvate carboxyltransferase domain; it reads LIIFDTTLRD…DLNIDTTHIV (264 aa). Positions 14, 202, 204, and 239 each coordinate Mn(2+). The interval 394–512 is regulatory domain; that stretch reads AFVSLSQHSE…SQAEKVAAQG (119 aa).

It belongs to the alpha-IPM synthase/homocitrate synthase family. LeuA type 1 subfamily. Homodimer. Requires Mn(2+) as cofactor.

Its subcellular location is the cytoplasm. It catalyses the reaction 3-methyl-2-oxobutanoate + acetyl-CoA + H2O = (2S)-2-isopropylmalate + CoA + H(+). Its pathway is amino-acid biosynthesis; L-leucine biosynthesis; L-leucine from 3-methyl-2-oxobutanoate: step 1/4. In terms of biological role, catalyzes the condensation of the acetyl group of acetyl-CoA with 3-methyl-2-oxobutanoate (2-ketoisovalerate) to form 3-carboxy-3-hydroxy-4-methylpentanoate (2-isopropylmalate). This is 2-isopropylmalate synthase from Variovorax paradoxus (strain S110).